The primary structure comprises 453 residues: Retroviral integration site protein Fli-1 homolog (453 aa).

Positions 111–197 constitute a PNT domain; that stretch reads PPPPNMTTNE…SHLNYLRDSS (87 aa). The segment covering 201–214 has biased composition (polar residues); sequence GYNTQAHTDQSSRL. The interval 201-273 is disordered; sequence GYNTQAHTDQ…YQILGPTSSR (73 aa). Basic and acidic residues predominate over residues 215–226; the sequence is TAKEDPSYEAVR. Polar residues-rich tracts occupy residues 230 to 239 and 246 to 273; these read WGNSMSSPVT and GTQNVNKSGDQQRSQPDPYQILGPTSSR. Residues 282–362 constitute a DNA-binding region (ETS); it reads IQLWQFLLEL…HGKRYAYKFD (81 aa).

The protein belongs to the ETS family.

The protein resides in the nucleus. This chain is Retroviral integration site protein Fli-1 homolog (fli1), found in Xenopus laevis (African clawed frog).